The primary structure comprises 59 residues: Large ribosomal subunit protein uL30 (59 aa).

Belongs to the universal ribosomal protein uL30 family. Part of the 50S ribosomal subunit.

This chain is Large ribosomal subunit protein uL30, found in Leptospira borgpetersenii serovar Hardjo-bovis (strain JB197).